Here is a 255-residue protein sequence, read N- to C-terminus: CDP-diacylglycerol pyrophosphatase (255 aa).

Residues 5–27 (LLITVALIAVLALTTLVAWRYLF) traverse the membrane as a helical segment.

The protein belongs to the Cdh family.

The protein localises to the cell inner membrane. It catalyses the reaction a CDP-1,2-diacyl-sn-glycerol + H2O = a 1,2-diacyl-sn-glycero-3-phosphate + CMP + 2 H(+). The protein operates within phospholipid metabolism; CDP-diacylglycerol degradation; phosphatidate from CDP-diacylglycerol: step 1/1. The polypeptide is CDP-diacylglycerol pyrophosphatase (Cronobacter sakazakii (strain ATCC BAA-894) (Enterobacter sakazakii)).